The following is a 628-amino-acid chain: Vacuolar-sorting receptor 4 (628 aa).

A signal peptide spans 1 to 24 (MKQLLCYLPWLLLLSLVVSPFNEA). Residues 25-569 (RFVVEKNSLS…SKTGSQVKSA (545 aa)) are Lumenal-facing. The region spanning 56–168 (QYGGSMAGTV…GFGEKLKKAI (113 aa)) is the PA domain. Residues Asn148, Asn294, and Asn434 are each glycosylated (N-linked (GlcNAc...) asparagine). EGF-like domains follow at residues 416–466 (ETNE…SHCE) and 469–516 (GPGR…KKCE). 7 cysteine pairs are disulfide-bonded: Cys420/Cys438, Cys427/Cys447, Cys449/Cys465, Cys473/Cys493, Cys480/Cys501, Cys503/Cys515, and Cys545/Cys558. The EGF-like 3; calcium-binding domain maps to 517-559 (DINECKEKKACQCPECSCKNTWGSYECSCSGDLLYMRDHDTCI). A helical membrane pass occupies residues 570–590 (WAAVWLIMLSLGLAAAGAYLV). At 591–628 (YKYRLRQYMDSEIRAIMAQYMPLDSQPEVPNHTNDERA) the chain is on the cytoplasmic side. The Tyrosine-based internalization motif signature appears at 610–613 (YMPL).

It belongs to the VSR (BP-80) family. In terms of tissue distribution, expressed at low levels in seeds, seedlings, roots, stems, leaves, flowers and siliques.

It is found in the membrane. The protein localises to the golgi apparatus membrane. It localises to the cytoplasmic vesicle. The protein resides in the clathrin-coated vesicle membrane. Its subcellular location is the prevacuolar compartment membrane. In terms of biological role, vacuolar-sorting receptor (VSR) involved in clathrin-coated vesicles sorting from Golgi apparatus to vacuoles. The protein is Vacuolar-sorting receptor 4 (VSR4) of Arabidopsis thaliana (Mouse-ear cress).